Consider the following 339-residue polypeptide: D-erythrose-4-phosphate dehydrogenase (339 aa).

NAD(+)-binding positions include 12–13 and Arg81; that span reads RI. Substrate is bound by residues 154–156, Arg200, 213–214, and Arg236; these read SCT and TR. Cys155 (nucleophile) is an active-site residue. NAD(+) is bound at residue Asn318.

It belongs to the glyceraldehyde-3-phosphate dehydrogenase family. Epd subfamily. Homotetramer.

It localises to the cytoplasm. It catalyses the reaction D-erythrose 4-phosphate + NAD(+) + H2O = 4-phospho-D-erythronate + NADH + 2 H(+). It participates in cofactor biosynthesis; pyridoxine 5'-phosphate biosynthesis; pyridoxine 5'-phosphate from D-erythrose 4-phosphate: step 1/5. Functionally, catalyzes the NAD-dependent conversion of D-erythrose 4-phosphate to 4-phosphoerythronate. The sequence is that of D-erythrose-4-phosphate dehydrogenase from Cronobacter sakazakii (strain ATCC BAA-894) (Enterobacter sakazakii).